The chain runs to 127 residues: UPF0325 protein VIBHAR_03240 (127 aa).

It belongs to the UPF0325 family.

This Vibrio campbellii (strain ATCC BAA-1116) protein is UPF0325 protein VIBHAR_03240.